The chain runs to 124 residues: Small ribosomal subunit protein uS12 (124 aa).

Position 89 is a 3-methylthioaspartic acid (aspartate 89).

It belongs to the universal ribosomal protein uS12 family. Part of the 30S ribosomal subunit. Contacts proteins S8 and S17. May interact with IF1 in the 30S initiation complex.

Functionally, with S4 and S5 plays an important role in translational accuracy. Its function is as follows. Interacts with and stabilizes bases of the 16S rRNA that are involved in tRNA selection in the A site and with the mRNA backbone. Located at the interface of the 30S and 50S subunits, it traverses the body of the 30S subunit contacting proteins on the other side and probably holding the rRNA structure together. The combined cluster of proteins S8, S12 and S17 appears to hold together the shoulder and platform of the 30S subunit. The sequence is that of Small ribosomal subunit protein uS12 from Shewanella sediminis (strain HAW-EB3).